The chain runs to 534 residues: Cytochrome P450 monooxygenase ascG (534 aa).

The chain crosses the membrane as a helical span at residues 13–33; it reads FVASFPALSAAAGLIVAISFI. N-linked (GlcNAc...) asparagine glycosylation is present at asparagine 466. Residue cysteine 469 participates in heme binding.

This sequence belongs to the cytochrome P450 family. Heme is required as a cofactor.

It is found in the membrane. The catalysed reaction is ilicicolin C + NADPH + O2 + H(+) = ascochlorin + NADP(+) + 2 H2O. The protein operates within secondary metabolite biosynthesis; terpenoid biosynthesis. Its function is as follows. Cytochrome P450 monooxygenase; part of the asc-1 gene cluster that mediates the biosynthesis of both ascochlorin and ascofuranone, a strong inhibitor of cyanide-insensitive alternative oxidases and a promising drug candidate against African trypanosomiasis. The first step in the pathway is performed by the non-reducing polyketide synthase ascC that produces orsellinic acid by condensing acetyl-CoA with 3 malonyl-CoA units. Orsellinic acid is then prenylated by the prenyltransferase ascA to yield ilicicolinic acid B. Ilicicolinic acid B is further reduced to ilicicolin B by the reductase ascB. The halogenase ascD then chlorinates ilicicolin B to produce ilicicolin A which is converted to ilicicolin A epoxide by the cytochrome P450 monooxygenase ascE that catalyzes stereoselective epoxidation of the terminal double bond of the prenyl group. Ilicicolin A epoxide is the last common precursor for the biosynthesis of ascofuranone and ascochlorin. The terpene cyclase ascF produces a monocyclic terpene, and the cyclization reaction is proposed to be initiated by protonation of the terminal epoxide of ilicicolin A epoxide to generate a monocyclic tertiarycation, which is followed by a series of hydride and methyl shifts with abstraction of proton, leading to the formation of the (14S,15R,19R)-trimethylcyclohexanone ring structure of ilicicolin C, which is finally reduced to ascochlorin by the dehydrogenase ascG. On the other hand, ilicicolin A epoxide is hydroxylated by the cytochrome P450 monooxygenase ascH, and the resultant product is cyclized by the terpene cyclase ascI to ascofuranol via protonation-initiated epoxide ring opening, which facilitates the 6-endo-tet cyclization to form the tetrahy-drofuran ring. Finally, ascofuranol is oxidized into ascofuranone by ascJ. This is Cytochrome P450 monooxygenase ascG from Acremonium egyptiacum (Oospora egyptiaca).